A 192-amino-acid polypeptide reads, in one-letter code: Flavin prenyltransferase UbiX (192 aa).

FMN-binding positions include 10-12 (GAS), S36, 92-95 (SVAT), and R127. Dimethylallyl phosphate is bound by residues Y157 and K173.

Belongs to the UbiX/PAD1 family.

The catalysed reaction is dimethylallyl phosphate + FMNH2 = prenylated FMNH2 + phosphate. In terms of biological role, flavin prenyltransferase that catalyzes the synthesis of the prenylated FMN cofactor (prenyl-FMN) for 4-hydroxy-3-polyprenylbenzoic acid decarboxylase UbiD. The prenyltransferase is metal-independent and links a dimethylallyl moiety from dimethylallyl monophosphate (DMAP) to the flavin N5 and C6 atoms of FMN. The protein is Flavin prenyltransferase UbiX of Chlamydia trachomatis serovar D (strain ATCC VR-885 / DSM 19411 / UW-3/Cx).